Here is a 290-residue protein sequence, read N- to C-terminus: 33 kDa chaperonin (290 aa).

Cystine bridges form between cysteine 231–cysteine 233 and cysteine 263–cysteine 266.

It belongs to the HSP33 family. Post-translationally, under oxidizing conditions two disulfide bonds are formed involving the reactive cysteines. Under reducing conditions zinc is bound to the reactive cysteines and the protein is inactive.

The protein localises to the cytoplasm. In terms of biological role, redox regulated molecular chaperone. Protects both thermally unfolding and oxidatively damaged proteins from irreversible aggregation. Plays an important role in the bacterial defense system toward oxidative stress. This chain is 33 kDa chaperonin, found in Thermotoga petrophila (strain ATCC BAA-488 / DSM 13995 / JCM 10881 / RKU-1).